A 453-amino-acid chain; its full sequence is Sialic acid-binding Ig-like lectin 6 (453 aa).

Residues 1–26 form the signal peptide; the sequence is MQGAQEASASEMLPLLLPLLWAGALA. At 27–347 the chain is on the extracellular side; it reads QERRFQLEGP…WKPEGRAGGV (321 aa). Positions 28–123 constitute an Ig-like V-type domain; that stretch reads ERRFQLEGPE…RDNAAYFFRL (96 aa). Cystine bridges form between Cys46/Cys172, Cys51/Cys104, and Cys166/Cys215. N-linked (GlcNAc...) asparagine glycosylation occurs at Asn103. Arg122 lines the N-acetylneuraminate pocket. The Ig-like C2-type 1 domain maps to 148–231; sequence PNISIPGTLE…AGVTMERTIQ (84 aa). N-linked (GlcNAc...) asparagine glycosylation is found at Asn149 and Asn163. Asn233 carries N-linked (GlcNAc...) asparagine glycosylation. The Ig-like C2-type 2 domain maps to 238 to 333; sequence PQKVAISIFQ…PLGSLQISLS (96 aa). Cys274 and Cys319 are oxidised to a cystine. Residues 348–368 form a helical membrane-spanning segment; that stretch reads LGAVWGASITTLVFLCVCFIF. The Cytoplasmic segment spans residues 369 to 453; it reads RVKTRRKKAA…TEYSEIKIHK (85 aa). The ITIM motif motif lies at 424–429; it reads LHYAVL. Residues 444-449 carry the SLAM-like motif motif; that stretch reads TEYSEI.

This sequence belongs to the immunoglobulin superfamily. SIGLEC (sialic acid binding Ig-like lectin) family. In terms of assembly, interacts with LEP. Expressed at high levels in placenta (cyto- and syncytiotrophoblastic cells) and at lower levels in spleen, peripheral blood leukocytes (predominantly B-cells) and small intestine.

It localises to the cell membrane. Its subcellular location is the secreted. Putative adhesion molecule that mediates sialic-acid dependent binding to cells. Binds to alpha-2,6-linked sialic acid. The sialic acid recognition site may be masked by cis interactions with sialic acids on the same cell surface. The polypeptide is Sialic acid-binding Ig-like lectin 6 (SIGLEC6) (Homo sapiens (Human)).